The primary structure comprises 94 residues: Large ribosomal subunit protein bL31 (94 aa).

A disordered region spans residues 65 to 94; it reads YGMADSENDSTDKKKTTNEKKVSDSPSKES. The span at 74-94 shows a compositional bias: basic and acidic residues; sequence STDKKKTTNEKKVSDSPSKES.

The protein belongs to the bacterial ribosomal protein bL31 family. Type A subfamily. As to quaternary structure, part of the 50S ribosomal subunit.

Its function is as follows. Binds the 23S rRNA. The chain is Large ribosomal subunit protein bL31 from Prochlorococcus marinus (strain MIT 9211).